The following is a 291-amino-acid chain: Ribose-phosphate pyrophosphokinase (291 aa).

Residues 34–36 and 92–93 contribute to the ATP site; these read DGE and RQ. 2 residues coordinate Mg(2+): His-125 and Asp-165. The active site involves Lys-188. D-ribose 5-phosphate-binding residues include Arg-190 and Asp-214.

Belongs to the ribose-phosphate pyrophosphokinase family. Class III (archaeal) subfamily. The cofactor is Mg(2+).

It localises to the cytoplasm. It catalyses the reaction D-ribose 5-phosphate + ATP = 5-phospho-alpha-D-ribose 1-diphosphate + AMP + H(+). The protein operates within metabolic intermediate biosynthesis; 5-phospho-alpha-D-ribose 1-diphosphate biosynthesis; 5-phospho-alpha-D-ribose 1-diphosphate from D-ribose 5-phosphate (route I): step 1/1. In terms of biological role, involved in the biosynthesis of the central metabolite phospho-alpha-D-ribosyl-1-pyrophosphate (PRPP) via the transfer of pyrophosphoryl group from ATP to 1-hydroxyl of ribose-5-phosphate (Rib-5-P). This is Ribose-phosphate pyrophosphokinase from Methanopyrus kandleri (strain AV19 / DSM 6324 / JCM 9639 / NBRC 100938).